The primary structure comprises 126 residues: Large ribosomal subunit protein bL12 (126 aa).

This sequence belongs to the bacterial ribosomal protein bL12 family. As to quaternary structure, homodimer. Part of the ribosomal stalk of the 50S ribosomal subunit. Forms a multimeric L10(L12)X complex, where L10 forms an elongated spine to which 2 to 4 L12 dimers bind in a sequential fashion. Binds GTP-bound translation factors.

Its function is as follows. Forms part of the ribosomal stalk which helps the ribosome interact with GTP-bound translation factors. Is thus essential for accurate translation. The protein is Large ribosomal subunit protein bL12 of Solibacter usitatus (strain Ellin6076).